The chain runs to 906 residues: Protein translocase subunit SecA (906 aa).

ATP contacts are provided by residues Gln-86, 104 to 108 (GEGKT), and Asp-511. 2 stretches are compositionally biased toward basic and acidic residues: residues 853–865 (HESV…RHDE) and 877–888 (VRREGPKVKRND). The segment at 853 to 906 (HESVIDNNQRHDEDEQEEAPKVQQVRREGPKVKRNDPCPCGSGKKYKQCHGKVE) is disordered. The Zn(2+) site is built by Cys-890, Cys-892, Cys-901, and His-902. Residues 896-906 (KKYKQCHGKVE) show a composition bias toward basic residues.

This sequence belongs to the SecA family. As to quaternary structure, monomer and homodimer. Part of the essential Sec protein translocation apparatus which comprises SecA, SecYEG and auxiliary proteins SecDF-YajC and YidC. Zn(2+) serves as cofactor.

It localises to the cell inner membrane. The protein resides in the cytoplasm. The catalysed reaction is ATP + H2O + cellular proteinSide 1 = ADP + phosphate + cellular proteinSide 2.. Functionally, part of the Sec protein translocase complex. Interacts with the SecYEG preprotein conducting channel. Has a central role in coupling the hydrolysis of ATP to the transfer of proteins into and across the cell membrane, serving both as a receptor for the preprotein-SecB complex and as an ATP-driven molecular motor driving the stepwise translocation of polypeptide chains across the membrane. This is Protein translocase subunit SecA from Francisella tularensis subsp. holarctica (strain OSU18).